The primary structure comprises 207 residues: Outer-membrane lipoprotein carrier protein (207 aa).

The first 21 residues, 1–21 (MRAIRMLLVSALAMGAVSAHA), serve as a signal peptide directing secretion.

Belongs to the LolA family. Monomer.

It is found in the periplasm. Participates in the translocation of lipoproteins from the inner membrane to the outer membrane. Only forms a complex with a lipoprotein if the residue after the N-terminal Cys is not an aspartate (The Asp acts as a targeting signal to indicate that the lipoprotein should stay in the inner membrane). The chain is Outer-membrane lipoprotein carrier protein from Pseudomonas entomophila (strain L48).